The sequence spans 170 residues: Cyclic pyranopterin monophosphate synthase (170 aa).

Substrate contacts are provided by residues 89–91 (LCH) and 125–126 (ME). The active site involves aspartate 140.

This sequence belongs to the MoaC family. As to quaternary structure, homohexamer; trimer of dimers.

It carries out the reaction (8S)-3',8-cyclo-7,8-dihydroguanosine 5'-triphosphate = cyclic pyranopterin phosphate + diphosphate. The protein operates within cofactor biosynthesis; molybdopterin biosynthesis. Its function is as follows. Catalyzes the conversion of (8S)-3',8-cyclo-7,8-dihydroguanosine 5'-triphosphate to cyclic pyranopterin monophosphate (cPMP). The chain is Cyclic pyranopterin monophosphate synthase from Streptomyces avermitilis (strain ATCC 31267 / DSM 46492 / JCM 5070 / NBRC 14893 / NCIMB 12804 / NRRL 8165 / MA-4680).